A 95-amino-acid chain; its full sequence is Co-chaperonin GroES (95 aa).

Belongs to the GroES chaperonin family. In terms of assembly, heptamer of 7 subunits arranged in a ring. Interacts with the chaperonin GroEL.

It localises to the cytoplasm. Together with the chaperonin GroEL, plays an essential role in assisting protein folding. The GroEL-GroES system forms a nano-cage that allows encapsulation of the non-native substrate proteins and provides a physical environment optimized to promote and accelerate protein folding. GroES binds to the apical surface of the GroEL ring, thereby capping the opening of the GroEL channel. This Chlorobaculum tepidum (strain ATCC 49652 / DSM 12025 / NBRC 103806 / TLS) (Chlorobium tepidum) protein is Co-chaperonin GroES.